We begin with the raw amino-acid sequence, 211 residues long: Guanylate kinase (211 aa).

Residues Gly7–Arg187 enclose the Guanylate kinase-like domain. An ATP-binding site is contributed by Gly14–Ala21.

The protein belongs to the guanylate kinase family.

It localises to the cytoplasm. The enzyme catalyses GMP + ATP = GDP + ADP. Essential for recycling GMP and indirectly, cGMP. The polypeptide is Guanylate kinase (Aster yellows witches'-broom phytoplasma (strain AYWB)).